We begin with the raw amino-acid sequence, 166 residues long: Urease accessory protein UreE 2 (166 aa).

Residues 133-156 (QPEHGAYGGGHHHSRAGEEDFNYP) form a disordered region.

This sequence belongs to the UreE family.

The protein resides in the cytoplasm. Involved in urease metallocenter assembly. Binds nickel. Probably functions as a nickel donor during metallocenter assembly. The chain is Urease accessory protein UreE 2 from Pseudomonas syringae pv. tomato (strain ATCC BAA-871 / DC3000).